The primary structure comprises 336 residues: D-erythrose-4-phosphate dehydrogenase (336 aa).

11–12 lines the NAD(+) pocket; sequence RI. Residues 153-155, Arg199, 212-213, and Arg235 contribute to the substrate site; these read SCT and TK. Catalysis depends on Cys154, which acts as the Nucleophile. Asn317 contributes to the NAD(+) binding site.

The protein belongs to the glyceraldehyde-3-phosphate dehydrogenase family. Epd subfamily. In terms of assembly, homotetramer.

The protein localises to the cytoplasm. It catalyses the reaction D-erythrose 4-phosphate + NAD(+) + H2O = 4-phospho-D-erythronate + NADH + 2 H(+). The protein operates within cofactor biosynthesis; pyridoxine 5'-phosphate biosynthesis; pyridoxine 5'-phosphate from D-erythrose 4-phosphate: step 1/5. Functionally, catalyzes the NAD-dependent conversion of D-erythrose 4-phosphate to 4-phosphoerythronate. The protein is D-erythrose-4-phosphate dehydrogenase of Aeromonas salmonicida (strain A449).